An 86-amino-acid chain; its full sequence is Large ribosomal subunit protein bL31B (86 aa).

It belongs to the bacterial ribosomal protein bL31 family. Type B subfamily. In terms of assembly, part of the 50S ribosomal subunit.

The polypeptide is Large ribosomal subunit protein bL31B (Ralstonia pickettii (strain 12J)).